The chain runs to 142 residues: Hemoglobin subunit alpha (142 aa).

The region spanning 2 to 142 (VLSPADKSNV…VSTVLTSKYR (141 aa)) is the Globin domain. S4 carries the post-translational modification Phosphoserine. An N6-succinyllysine mark is found at K8 and K12. An N6-acetyllysine; alternate modification is found at K17. An N6-succinyllysine; alternate modification is found at K17. Y25 bears the Phosphotyrosine mark. Phosphoserine is present on S36. K41 is modified (N6-succinyllysine). S50 is modified (phosphoserine). H59 provides a ligand contact to O2. H88 lines the heme b pocket. Position 103 is a phosphoserine (S103). T109 is subject to Phosphothreonine. A phosphoserine mark is found at S125 and S132. 2 positions are modified to phosphothreonine: T135 and T138. S139 bears the Phosphoserine mark.

This sequence belongs to the globin family. Heterotetramer of two alpha chains and two beta chains. Red blood cells.

Involved in oxygen transport from the lung to the various peripheral tissues. Functionally, hemopressin acts as an antagonist peptide of the cannabinoid receptor CNR1. Hemopressin-binding efficiently blocks cannabinoid receptor CNR1 and subsequent signaling. The polypeptide is Hemoglobin subunit alpha (HBA) (Ateles geoffroyi (Black-handed spider monkey)).